The primary structure comprises 305 residues: tRNA pseudouridine synthase B (305 aa).

D41 functions as the Nucleophile in the catalytic mechanism.

The protein belongs to the pseudouridine synthase TruB family. Type 1 subfamily.

The catalysed reaction is uridine(55) in tRNA = pseudouridine(55) in tRNA. Its function is as follows. Responsible for synthesis of pseudouridine from uracil-55 in the psi GC loop of transfer RNAs. The sequence is that of tRNA pseudouridine synthase B from Prochlorococcus marinus (strain MIT 9301).